The primary structure comprises 86 residues: Cell division topological specificity factor (86 aa).

This sequence belongs to the MinE family.

Prevents the cell division inhibition by proteins MinC and MinD at internal division sites while permitting inhibition at polar sites. This ensures cell division at the proper site by restricting the formation of a division septum at the midpoint of the long axis of the cell. The chain is Cell division topological specificity factor from Shewanella loihica (strain ATCC BAA-1088 / PV-4).